The sequence spans 489 residues: 2-(3-amino-3-carboxypropyl)histidine synthase subunit 2 (489 aa).

At methionine 1 the chain carries N-acetylmethionine. Position 7 is a phosphoserine (serine 7). Residues cysteine 89, cysteine 110, and cysteine 341 each coordinate [4Fe-4S] cluster. Serine 446 is modified (phosphoserine). Threonine 467 is modified (phosphothreonine). At serine 488 the chain carries Phosphoserine.

This sequence belongs to the DPH1/DPH2 family. DPH2 subfamily. Component of the 2-(3-amino-3-carboxypropyl)histidine synthase complex composed of DPH1, DPH2, DPH3 and a NADH-dependent reductase. Interacts with DPH1. [4Fe-4S] cluster is required as a cofactor.

The protein operates within protein modification; peptidyl-diphthamide biosynthesis. Its function is as follows. Required for the first step of diphthamide biosynthesis, a post-translational modification of histidine which occurs in elongation factor 2. DPH1 and DPH2 transfer a 3-amino-3-carboxypropyl (ACP) group from S-adenosyl-L-methionine (SAM) to a histidine residue, the reaction is assisted by a reduction system comprising DPH3 and a NADH-dependent reductase. Facilitates the reduction of the catalytic iron-sulfur cluster found in the DPH1 subunit. This Mus musculus (Mouse) protein is 2-(3-amino-3-carboxypropyl)histidine synthase subunit 2 (Dph2).